The primary structure comprises 598 residues: MRTEYCGLVTEHLLGQTVSLCGWVHRRRDHGGVIFIDLRDREGLVQVVCDPDRAEMFAAAEGVRNEFCIQVKGLVRGRPEGTINAGLKSGRIEVLCHELNVLNASVTPPFQLDDDNLSETTRLTHRVLDLRRPQMQHNLRLRYRVAIEARKYLDEQGFIDIETPMLTKSTPEGARDYLVPSRVNAGQFFALPQSPQLFKQLLMVANFDRYYQITKCFRDEDLRADRQPEFTQIDCETSFLGEQEIRDLFEDMIRHIFKTTIGVELDATFPVMPYSEAMARFGSDKPDLRVKLEFTELTDAMKDVDFKVFSTPANTKDGRVAALRVPKGGELTRGDIDGYTEFVRIYGAKGLAWIKVNERAKGRDGLQSPIVKNLHDASIAAILERTGAQDGDIIFFAADRAKVVNDSLGALRLKIGHSEFGKANGLVEAGWKPLWVVDFPMFEYDDEEARYVAAHHPFTSPKDEHLEYLETDPGRCLAKAYDMVLNGWEIGGGSVRIHREEVQSKVFRALKIGPEEAQAKFGFLLDALQYGAPPHGGIAFGLDRIVTMMAGADSIRDVIAFPKTQRAQCLLTQAPSPVDERQLRELHIRLRQPEQPKA.

Glu172 serves as a coordination point for L-aspartate. Positions 196-199 are aspartate; sequence QLFK. Position 218 (Arg218) interacts with L-aspartate. ATP-binding positions include 218–220 and Gln227; that span reads RDE. His455 is an L-aspartate binding site. Position 489 (Glu489) interacts with ATP. Position 496 (Arg496) interacts with L-aspartate. Residue 541-544 coordinates ATP; the sequence is GLDR.

This sequence belongs to the class-II aminoacyl-tRNA synthetase family. Type 1 subfamily. In terms of assembly, homodimer.

It is found in the cytoplasm. The catalysed reaction is tRNA(Asx) + L-aspartate + ATP = L-aspartyl-tRNA(Asx) + AMP + diphosphate. Its function is as follows. Aspartyl-tRNA synthetase with relaxed tRNA specificity since it is able to aspartylate not only its cognate tRNA(Asp) but also tRNA(Asn). Reaction proceeds in two steps: L-aspartate is first activated by ATP to form Asp-AMP and then transferred to the acceptor end of tRNA(Asp/Asn). The protein is Aspartate--tRNA(Asp/Asn) ligase of Burkholderia mallei (strain ATCC 23344).